Reading from the N-terminus, the 279-residue chain is Protease HtpX homolog (279 aa).

2 helical membrane-spanning segments follow: residues 6 to 26 and 29 to 49; these read VFVLMAGLTGLVVAIGQALGG and GAILALLLSAGMNLFMYWGSS. Histidine 130 contributes to the Zn(2+) binding site. Residue glutamate 131 is part of the active site. Histidine 134 lines the Zn(2+) pocket. 2 consecutive transmembrane segments (helical) span residues 145 to 165 and 176 to 196; these read IAATMAGAVSNLAQFAFFFGG and VAGIAMLIIGPIVAMVIQFAI. Glutamate 201 contacts Zn(2+).

The protein belongs to the peptidase M48B family. Requires Zn(2+) as cofactor.

Its subcellular location is the cell inner membrane. The chain is Protease HtpX homolog from Gemmatimonas aurantiaca (strain DSM 14586 / JCM 11422 / NBRC 100505 / T-27).